A 248-amino-acid polypeptide reads, in one-letter code: ATP synthase subunit a (248 aa).

The next 5 membrane-spanning stretches (helical) occupy residues 31 to 51 (GQVLIASWIAIALILTVVILG), 90 to 110 (VPYVGTLFLFIFVSNWMGNLF), 129 to 149 (INTTAGLALLTSIMYFVAGIS), 195 to 215 (VIAVLVLLVPLFIPVPVMVLF), and 216 to 236 (LFTGAIQALIFSTLSAAYIGE).

Belongs to the ATPase A chain family. In terms of assembly, F-type ATPases have 2 components, CF(1) - the catalytic core - and CF(0) - the membrane proton channel. CF(1) has five subunits: alpha(3), beta(3), gamma(1), delta(1), epsilon(1). CF(0) has four main subunits: a, b, b' and c.

It localises to the cellular thylakoid membrane. Its function is as follows. Key component of the proton channel; it plays a direct role in the translocation of protons across the membrane. This is ATP synthase subunit a from Synechococcus sp. (strain JA-2-3B'a(2-13)) (Cyanobacteria bacterium Yellowstone B-Prime).